The following is a 240-amino-acid chain: uncharacterized protein (240 aa).

The disordered stretch occupies residues 1 to 27 (MKDLQKKSSVRRQITNEDDERYGEDSI). Phosphoserine occurs at positions 59 and 95. The tract at residues 189-227 (RTPSPTGKSVGDEATSNNMHSSSAIRNPNGPTVDPEEGK) is disordered. Positions 202 to 218 (ATSNNMHSSSAIRNPNG) are enriched in polar residues.

This is an uncharacterized protein from Saccharomyces cerevisiae (strain ATCC 204508 / S288c) (Baker's yeast).